The sequence spans 183 residues: Ribosome rescue factor SmrB (183 aa).

Residues 98–173 enclose the Smr domain; sequence LDLHGLTQLQ…GDAALLVLIE (76 aa).

This sequence belongs to the SmrB family. In terms of assembly, associates with collided ribosomes, but not with correctly translating polysomes.

Its function is as follows. Acts as a ribosome collision sensor. Detects stalled/collided disomes (pairs of ribosomes where the leading ribosome is stalled and a second ribosome has collided with it) and endonucleolytically cleaves mRNA at the 5' boundary of the stalled ribosome. Stalled/collided disomes form a new interface (primarily via the 30S subunits) that binds SmrB. Cleaved mRNA becomes available for tmRNA ligation, leading to ribosomal subunit dissociation and rescue of stalled ribosomes. This Salmonella arizonae (strain ATCC BAA-731 / CDC346-86 / RSK2980) protein is Ribosome rescue factor SmrB.